A 323-amino-acid polypeptide reads, in one-letter code: Trihelix transcription factor GT-3a (323 aa).

Basic residues predominate over residues 1–20; it reads MDRRNPFQHHHHHHQLHHHL. Residues 1-51 are disordered; sequence MDRRNPFQHHHHHHQLHHHLIQQQQLPPPPLSTTATMDPGGGGGGGERIPQ. In terms of domain architecture, Myb-like spans 52–108; it reads WSIEETKELLAIREELDQTFMETKRNKLLWEVVAAKMADKGFVRSAEQCKSKWKNLV. Disordered regions lie at residues 147–176, 190–220, and 269–297; these read EATE…EPNQ, KRET…GTKA, and ELEE…ARAQ. Over residues 164–176 the composition is skewed to acidic residues; sequence SDDEEEEVDEPNQ.

Homodimer. Heterodimer with GT-3B. Predominantly expressed in roots and flower buds.

The protein resides in the nucleus. Its function is as follows. Probable transcription factor that binds specifically to the core DNA sequence 5'-GTTAC-3'. The chain is Trihelix transcription factor GT-3a (GT-3A) from Arabidopsis thaliana (Mouse-ear cress).